We begin with the raw amino-acid sequence, 531 residues long: Retinoid isomerohydrolase (531 aa).

A lipid anchor (S-palmitoyl cysteine; in membrane form) is attached at Cys112. Residues His180, His241, and His313 each contribute to the Fe cation site. Residue Cys329 is the site of S-palmitoyl cysteine; in membrane form attachment. A Fe cation-binding site is contributed by His526.

This sequence belongs to the carotenoid oxygenase family. Fe(2+) is required as a cofactor. In terms of processing, palmitoylated. In terms of tissue distribution, retinal pigment epithelium-specific.

It localises to the cytoplasm. The protein localises to the cell membrane. The enzyme catalyses an all-trans-retinyl ester + H2O = 11-cis-retinol + a fatty acid + H(+). The catalysed reaction is lutein = (3R,3'S)-zeaxanthin. It carries out the reaction all-trans-retinyl hexadecanoate + H2O = 11-cis-retinol + hexadecanoate + H(+). Functionally, plays important roles in the production of 11-cis retinal and in visual pigment regeneration. Capable of catalyzing the isomerization of lutein to meso-zeaxanthin an eye-specific carotenoid. The chain is Retinoid isomerohydrolase (rpe65a) from Danio rerio (Zebrafish).